A 222-amino-acid polypeptide reads, in one-letter code: Eukaryotic translation initiation factor 3 subunit K (222 aa).

The 163-residue stretch at 46-208 folds into the PCI domain; that stretch reads YDLEANLAVL…KIKTKNITEK (163 aa).

Belongs to the eIF-3 subunit K family. Component of the eukaryotic translation initiation factor 3 (eIF-3) complex. The eIF-3 complex interacts with pix.

It localises to the cytoplasm. Component of the eukaryotic translation initiation factor 3 (eIF-3) complex, which is involved in protein synthesis of a specialized repertoire of mRNAs and, together with other initiation factors, stimulates binding of mRNA and methionyl-tRNAi to the 40S ribosome. The eIF-3 complex specifically targets and initiates translation of a subset of mRNAs involved in cell proliferation. The sequence is that of Eukaryotic translation initiation factor 3 subunit K from Drosophila virilis (Fruit fly).